The sequence spans 72 residues: Protein kish-A (72 aa).

The first 26 residues, 1-26 (MSAIFNFQSLLTVILLLICTCAYIRS), serve as a signal peptide directing secretion. At 27 to 53 (LAPSLLDKNKSGLLGIFWKCARIGERK) the chain is on the extracellular side. N-linked (GlcNAc...) asparagine glycosylation occurs at Asn-35. A helical transmembrane segment spans residues 54-71 (SPYVAVCCVVMAFSILFM). Position 72 (Gln-72) is a topological domain, cytoplasmic.

The protein belongs to the KISH family.

It is found in the golgi apparatus membrane. In terms of biological role, involved in the early part of the secretory pathway. This Taeniopygia guttata (Zebra finch) protein is Protein kish-A (TMEM167A).